The chain runs to 357 residues: ATP-dependent 6-phosphofructokinase 2 (357 aa).

Residues G12, 80-81 (KG), and 107-110 (GDGS) each bind ATP. D108 lines the Mg(2+) pocket. Substrate is bound by residues 131–133 (TID), R168, 175–177 (MGR), E229, R272, and 278–281 (HIQR). D133 acts as the Proton acceptor in catalysis.

It belongs to the phosphofructokinase type A (PFKA) family. Mixed-substrate PFK group III subfamily. Homodimer or homotetramer. Mg(2+) is required as a cofactor.

The protein resides in the cytoplasm. The enzyme catalyses beta-D-fructose 6-phosphate + ATP = beta-D-fructose 1,6-bisphosphate + ADP + H(+). Its pathway is carbohydrate degradation; glycolysis; D-glyceraldehyde 3-phosphate and glycerone phosphate from D-glucose: step 3/4. With respect to regulation, subject to allosteric activation by ADP and other diphosphonucleosides, and inhibition by phosphoenolpyruvate. Its function is as follows. Catalyzes the phosphorylation of D-fructose 6-phosphate to fructose 1,6-bisphosphate by ATP, the first committing step of glycolysis. In Nostoc sp. (strain PCC 7120 / SAG 25.82 / UTEX 2576), this protein is ATP-dependent 6-phosphofructokinase 2.